Consider the following 444-residue polypeptide: Tol-Pal system protein TolB (444 aa).

Positions 1–19 (MRNIIYFILSLLFSVTSYA) are cleaved as a signal peptide.

This sequence belongs to the TolB family. In terms of assembly, the Tol-Pal system is composed of five core proteins: the inner membrane proteins TolA, TolQ and TolR, the periplasmic protein TolB and the outer membrane protein Pal. They form a network linking the inner and outer membranes and the peptidoglycan layer.

The protein resides in the periplasm. Functionally, part of the Tol-Pal system, which plays a role in outer membrane invagination during cell division and is important for maintaining outer membrane integrity. This is Tol-Pal system protein TolB from Rickettsia peacockii (strain Rustic).